Consider the following 1889-residue polypeptide: Bromodomain adjacent to zinc finger domain protein 2A (1889 aa).

Disordered regions lie at residues 1–59 (MEME…NGLS), 384–433 (FGLN…SPAA), and 479–526 (TTPV…GAVA). Polar residues predominate over residues 35 to 59 (TNGSPMNFPQQGKSLNGDVNVNGLS). Residues 332 to 726 (EGNPVISALD…ESQTPVQGQA (395 aa)) are required for TTF1 binding. Low complexity predominate over residues 423 to 433 (PAVSPTASPAA). Polar residues-rich tracts occupy residues 479–489 (TTPVTSPQGSP) and 498–509 (QTVSPARKNVSS). A Phosphothreonine modification is found at Thr-499. Position 501 is a phosphoserine (Ser-501). Residues 538-609 (IATPEEVRLP…EHFSFSPRMP (72 aa)) form the MBD domain. Thr-540 is modified (phosphothreonine). The residue at position 605 (Ser-605) is a Phosphoserine. Residues 638–791 (QAITGKRGRP…ARPSCRADKT (154 aa)) are disordered. DNA-binding regions (a.T hook) lie at residues 641–653 (TGKRGRPRNNEKA) and 662–674 (KRGRGRPPKIKMP). Over residues 648-660 (RNNEKAKNKEVPK) the composition is skewed to basic and acidic residues. A compositionally biased stretch (basic residues) spans 661 to 670 (VKRGRGRPPK). Lys-672 carries the N6-acetyllysine; by KAT8 modification. Positions 678 to 701 (NKTDNRLPKKLETQEILSEDDKAK) are enriched in basic and acidic residues. Residues 686–813 (KKLETQEILS…QQAILEEMKK (128 aa)) are a coiled coil. Basic residues predominate over residues 702–713 (MTKNKKKMRQKV). Polar residues predominate over residues 716 to 726 (GESQTPVQGQA). 2 stretches are compositionally biased toward basic and acidic residues: residues 731-740 (KQDTKSLKQK) and 748-791 (AEKE…ADKT). An N6-acetyllysine modification is found at Lys-790. Residues 839 to 904 (SRAFSDCLTI…LKAALHDPGL (66 aa)) form the DDT domain. Lys-857 participates in a covalent cross-link: Glycyl lysine isopeptide (Lys-Gly) (interchain with G-Cter in SUMO2). Residues 1039–1063 (EETSGIEEEEEEENTTAVHGRRGRK) are disordered. A Phosphoserine modification is found at Ser-1042. Acidic residues predominate over residues 1042-1052 (SGIEEEEEEEN). Residues Lys-1141 and Lys-1163 each participate in a glycyl lysine isopeptide (Lys-Gly) (interchain with G-Cter in SUMO2) cross-link. Disordered regions lie at residues 1147 to 1247 (LMEV…GQSQ) and 1269 to 1397 (LSSS…GRPP). A Phosphoserine modification is found at Ser-1174. The a.T hook 3 DNA-binding region spans 1176 to 1188 (ARSRGRPRKPKPG). 3 stretches are compositionally biased toward polar residues: residues 1190–1231 (LQPQ…QPSS), 1269–1278 (LSSSVLTPDS), and 1331–1346 (DQPTPSLQLLASSKPM). Residues Ser-1374, Ser-1377, and Ser-1383 each carry the phosphoserine modification. The a.T hook 4 DNA-binding region spans 1390 to 1402 (PKRRGRPPSKFFK). Phosphoserine is present on Ser-1545. Glycyl lysine isopeptide (Lys-Gly) (interchain with G-Cter in SUMO2) cross-links involve residues Lys-1662 and Lys-1695. The PHD-type zinc finger occupies 1662–1712 (KVTCLVCRKGDNDEFLLLCDGCDRGCHIYCHRPKMEAVPEGDWFCAVCLSQ). The interval 1720-1778 (QRPGFPKRGQKRKSSFPLTFPEGDSRRRMLSRSRDSPAVPRYPEDGLSPPKRRRHSMRS) is disordered. Ser-1733 bears the Phosphoserine mark. Thr-1738 carries the phosphothreonine modification. The span at 1742–1754 (GDSRRRMLSRSRD) shows a compositional bias: basic and acidic residues. Phosphoserine occurs at positions 1755 and 1767. Basic residues predominate over residues 1769–1778 (PKRRRHSMRS). The Bromo domain occupies 1777 to 1881 (RSHHSDLTFC…RFFESRWEEF (105 aa)).

The protein belongs to the WAL family. In terms of assembly, component of the NoRC-1 ISWI chromatin remodeling complex at least composed of SMARCA1 and BAZ2A/TIP5, which regulates the spacing of histone octamers on the DNA template to facilitate access to DNA. Within the NoRC-1 ISWI chromatin remodeling complex interacts with SMARCA1; the interaction is direct. Component of the NoRC-5 ISWI chromatin remodeling complex (also called the NoRC nucleolar-remodeling complex), at least composed of SMARCA5/SNF2H and BAZ2A/TIP5, which regulates the spacing of histone octamers on the DNA template to facilitate access to DNA. Within the NoRC-5 ISWI chromatin remodeling complexes interacts with SMARCA5/SNF2H; the interaction is direct. Interacts with TTF1; the interaction is required for recruitment of the NoRC-5 ISWI chromatin remodeling complex to rDNA. Interacts with HDAC1. Interacts with SIN3A. Interacts with DNMT1 and DNM3B. Interacts with BEND3 and USP21. Ubiquitinated. Deubiquitinated by USP21 leading to its stabilization. In terms of processing, acetylation at Lys-672 by KAT8/MOF promotes its dissociation from pRNA, affecting heterochromatin formation, nucleosome positioning and rDNA silencing. Deacetylation by SIRT1 in late S phase enhances pRNA-binding, allowing de novo DNA methylation and heterochromatin formation. Acetylation is high during S phase and declines to background levels in late S phase when the silent copies of rRNA genes are replicated.

It localises to the nucleus. Its subcellular location is the nucleolus. Its function is as follows. Regulatory subunit of the ATP-dependent NoRC-1 and NoRC-5 ISWI chromatin remodeling complexes, which form ordered nucleosome arrays on chromatin and facilitate access to DNA during DNA-templated processes such as DNA replication, transcription, and repair. Both complexes regulate the spacing of nucleosomes along the chromatin and have the ability to slide mononucleosomes to the center of a DNA template. Directly stimulates the ATPase activity of SMARCA5 in the NoRC-5 ISWI chromatin remodeling complex. The NoRC-1 ISWI chromatin remodeling complex has a lower ATP hydrolysis rate than the NoRC-5 ISWI chromatin remodeling complex. Within the NoRC-5 ISWI chromatin remodeling complex, mediates silencing of a fraction of rDNA by recruiting histone-modifying enzymes and DNA methyltransferases, leading to heterochromatin formation and transcriptional silencing. In the complex, it plays a central role by being recruited to rDNA and by targeting chromatin modifying enzymes such as HDAC1, leading to repress RNA polymerase I transcription. Recruited to rDNA via its interaction with TTF1 and its ability to recognize and bind histone H4 acetylated on 'Lys-16' (H4K16ac), leading to deacetylation of H4K5ac, H4K8ac, H4K12ac but not H4K16ac. Specifically binds pRNAs, 150-250 nucleotide RNAs that are complementary in sequence to the rDNA promoter; pRNA-binding is required for heterochromatin formation and rDNA silencing. The chain is Bromodomain adjacent to zinc finger domain protein 2A (Baz2a) from Mus musculus (Mouse).